The sequence spans 272 residues: Phosphoribosylformylglycinamidine synthase subunit PurQ (272 aa).

A Glutamine amidotransferase type-1 domain is found at 8–243 (VLVMSGYGIN…SEPEYQLKKE (236 aa)). The active-site Nucleophile is Cys-98. Active-site residues include His-225, Glu-227, and Glu-235.

As to quaternary structure, part of the FGAM synthase complex composed of 1 PurL, 1 PurQ and 2 PurS subunits.

Its subcellular location is the cytoplasm. It carries out the reaction N(2)-formyl-N(1)-(5-phospho-beta-D-ribosyl)glycinamide + L-glutamine + ATP + H2O = 2-formamido-N(1)-(5-O-phospho-beta-D-ribosyl)acetamidine + L-glutamate + ADP + phosphate + H(+). It catalyses the reaction L-glutamine + H2O = L-glutamate + NH4(+). The protein operates within purine metabolism; IMP biosynthesis via de novo pathway; 5-amino-1-(5-phospho-D-ribosyl)imidazole from N(2)-formyl-N(1)-(5-phospho-D-ribosyl)glycinamide: step 1/2. Part of the phosphoribosylformylglycinamidine synthase complex involved in the purines biosynthetic pathway. Catalyzes the ATP-dependent conversion of formylglycinamide ribonucleotide (FGAR) and glutamine to yield formylglycinamidine ribonucleotide (FGAM) and glutamate. The FGAM synthase complex is composed of three subunits. PurQ produces an ammonia molecule by converting glutamine to glutamate. PurL transfers the ammonia molecule to FGAR to form FGAM in an ATP-dependent manner. PurS interacts with PurQ and PurL and is thought to assist in the transfer of the ammonia molecule from PurQ to PurL. The polypeptide is Phosphoribosylformylglycinamidine synthase subunit PurQ (Methanococcus maripaludis (strain C7 / ATCC BAA-1331)).